A 473-amino-acid chain; its full sequence is Mitochondrial distribution and morphology protein 10 (473 aa).

This sequence belongs to the MDM10 family. As to quaternary structure, component of the ER-mitochondria encounter structure (ERMES) or MDM complex, composed of MMM1, MDM10, MDM12 and MDM34. Associates with the mitochondrial outer membrane sorting assembly machinery SAM(core) complex.

The protein localises to the mitochondrion outer membrane. In terms of biological role, component of the ERMES/MDM complex, which serves as a molecular tether to connect the endoplasmic reticulum and mitochondria. Components of this complex are involved in the control of mitochondrial shape and protein biogenesis and may function in phospholipid exchange. MDM10 is involved in the late assembly steps of the general translocase of the mitochondrial outer membrane (TOM complex). Functions in the TOM40-specific route of the assembly of outer membrane beta-barrel proteins, including the association of TOM40 with the receptor TOM22 and small TOM proteins. Can associate with the SAM(core) complex as well as the MDM12-MMM1 complex, both involved in late steps of the major beta-barrel assembly pathway, that is responsible for biogenesis of all outer membrane beta-barrel proteins. May act as a switch that shuttles between both complexes and channels precursor proteins into the TOM40-specific pathway. Plays a role in mitochondrial morphology and in the inheritance of mitochondria. The protein is Mitochondrial distribution and morphology protein 10 of Candida albicans (strain SC5314 / ATCC MYA-2876) (Yeast).